We begin with the raw amino-acid sequence, 212 residues long: ATP phosphoribosyltransferase (212 aa).

This sequence belongs to the ATP phosphoribosyltransferase family. Short subfamily. In terms of assembly, heteromultimer composed of HisG and HisZ subunits.

Its subcellular location is the cytoplasm. The catalysed reaction is 1-(5-phospho-beta-D-ribosyl)-ATP + diphosphate = 5-phospho-alpha-D-ribose 1-diphosphate + ATP. Its pathway is amino-acid biosynthesis; L-histidine biosynthesis; L-histidine from 5-phospho-alpha-D-ribose 1-diphosphate: step 1/9. Catalyzes the condensation of ATP and 5-phosphoribose 1-diphosphate to form N'-(5'-phosphoribosyl)-ATP (PR-ATP). Has a crucial role in the pathway because the rate of histidine biosynthesis seems to be controlled primarily by regulation of HisG enzymatic activity. This Clostridium botulinum (strain ATCC 19397 / Type A) protein is ATP phosphoribosyltransferase.